Reading from the N-terminus, the 155-residue chain is Ribosome maturation factor RimP (155 aa).

This sequence belongs to the RimP family.

Its subcellular location is the cytoplasm. In terms of biological role, required for maturation of 30S ribosomal subunits. This chain is Ribosome maturation factor RimP, found in Bacteroides thetaiotaomicron (strain ATCC 29148 / DSM 2079 / JCM 5827 / CCUG 10774 / NCTC 10582 / VPI-5482 / E50).